The following is a 672-amino-acid chain: DNA ligase (672 aa).

NAD(+) contacts are provided by residues 32 to 36 (DEKYD), 82 to 83 (SL), and E113. The active-site N6-AMP-lysine intermediate is the K115. 4 residues coordinate NAD(+): R136, E173, K290, and K314. C408, C411, C427, and C433 together coordinate Zn(2+). In terms of domain architecture, BRCT spans 592–672 (DNNNTLFRKK…EFLNIINVYL (81 aa)).

It belongs to the NAD-dependent DNA ligase family. LigA subfamily. It depends on Mg(2+) as a cofactor. Mn(2+) is required as a cofactor.

The enzyme catalyses NAD(+) + (deoxyribonucleotide)n-3'-hydroxyl + 5'-phospho-(deoxyribonucleotide)m = (deoxyribonucleotide)n+m + AMP + beta-nicotinamide D-nucleotide.. Functionally, DNA ligase that catalyzes the formation of phosphodiester linkages between 5'-phosphoryl and 3'-hydroxyl groups in double-stranded DNA using NAD as a coenzyme and as the energy source for the reaction. It is essential for DNA replication and repair of damaged DNA. The sequence is that of DNA ligase from Buchnera aphidicola subsp. Baizongia pistaciae (strain Bp).